A 70-amino-acid polypeptide reads, in one-letter code: DNA gyrase inhibitor YacG (70 aa).

Zn(2+) contacts are provided by C7, C10, C26, and C30.

It belongs to the DNA gyrase inhibitor YacG family. As to quaternary structure, interacts with GyrB. Zn(2+) serves as cofactor.

Inhibits all the catalytic activities of DNA gyrase by preventing its interaction with DNA. Acts by binding directly to the C-terminal domain of GyrB, which probably disrupts DNA binding by the gyrase. This is DNA gyrase inhibitor YacG from Shewanella sediminis (strain HAW-EB3).